Consider the following 316-residue polypeptide: BTB/POZ domain-containing protein Y57A10B.3 (316 aa).

The signal sequence occupies residues methionine 1–glycine 21. Residues asparagine 91, asparagine 107, asparagine 118, asparagine 133, asparagine 191, and asparagine 260 are each glycosylated (N-linked (GlcNAc...) asparagine). A BTB domain is found at arginine 158–aspartate 226.

It localises to the secreted. The polypeptide is BTB/POZ domain-containing protein Y57A10B.3 (btb-14) (Caenorhabditis elegans).